The primary structure comprises 396 residues: Pre-mRNA-splicing regulator WTAP (396 aa).

Methionine 1 bears the N-acetylmethionine mark. At serine 14 the chain carries Phosphoserine. Composition is skewed to low complexity over residues 240–257 (QQQQ…TTSS) and 278–291 (SNGS…SGSG). The interval 240 to 396 (QQQQSQASAP…SSVNVQGAVL (157 aa)) is disordered. Phosphoserine is present on residues serine 297, serine 305, serine 306, and serine 341. Residues 305–316 (SSSGNGNKASNS) show a composition bias toward low complexity. Residues 340-351 (DSPTGSENSLTH) show a composition bias toward polar residues. Threonine 350 carries the post-translational modification Phosphothreonine. Over residues 352-368 (HSNDTDSSHDPQEEKAV) the composition is skewed to basic and acidic residues. Over residues 380–396 (HVQNGLDSSVNVQGAVL) the composition is skewed to polar residues. Residue serine 388 is modified to Phosphoserine.

The protein belongs to the fl(2)d family. Component of the WMM complex, a N6-methyltransferase complex composed of a catalytic subcomplex, named MAC, and of an associated subcomplex, named MACOM. The MAC subcomplex is composed of METTL3 and METTL14. The MACOM subcomplex is composed of WTAP, ZC3H13, CBLL1/HAKAI, VIRMA, and, in some cases of RBM15 (RBM15 or RBM15B). Interacts with WT1. Also a component of a MACOM-like complex, named WTAP complex, composed of WTAP, ZC3H13, CBLL1, VIRMA, RBM15, BCLAF1 and THRAP3. Interacts with CPNE4 (via VWFA domain).

It is found in the nucleus speckle. It localises to the nucleus. The protein resides in the nucleoplasm. The protein localises to the cytoplasm. Its function is as follows. Associated component of the WMM complex, a complex that mediates N6-methyladenosine (m6A) methylation of RNAs, a modification that plays a role in the efficiency of mRNA splicing and RNA processing. Acts as a key regulator of m6A methylation by promoting m6A methylation of mRNAs at the 3'-UTR. Required for accumulation of METTL3 and METTL14 to nuclear speckle. Acts as a mRNA splicing regulator. Regulates G2/M cell-cycle transition by binding to the 3' UTR of CCNA2, which enhances its stability. Impairs WT1 DNA-binding ability and inhibits expression of WT1 target genes. The sequence is that of Pre-mRNA-splicing regulator WTAP from Mus musculus (Mouse).